The sequence spans 417 residues: Serine hydroxymethyltransferase (417 aa).

K54 carries the N6-acetyllysine modification. (6S)-5,6,7,8-tetrahydrofolate is bound by residues L121 and 125 to 127 (GHL). An N6-(pyridoxal phosphate)lysine modification is found at K229. N6-acetyllysine occurs at positions 250, 285, and 354. 355 to 357 (SPF) lines the (6S)-5,6,7,8-tetrahydrofolate pocket. N6-acetyllysine is present on K375.

This sequence belongs to the SHMT family. In terms of assembly, homodimer. Requires pyridoxal 5'-phosphate as cofactor.

It localises to the cytoplasm. It catalyses the reaction (6R)-5,10-methylene-5,6,7,8-tetrahydrofolate + glycine + H2O = (6S)-5,6,7,8-tetrahydrofolate + L-serine. It functions in the pathway one-carbon metabolism; tetrahydrofolate interconversion. Its pathway is amino-acid biosynthesis; glycine biosynthesis; glycine from L-serine: step 1/1. Its function is as follows. Catalyzes the reversible interconversion of serine and glycine with tetrahydrofolate (THF) serving as the one-carbon carrier. This reaction serves as the major source of one-carbon groups required for the biosynthesis of purines, thymidylate, methionine, and other important biomolecules. Also exhibits THF-independent aldolase activity toward beta-hydroxyamino acids, producing glycine and aldehydes, via a retro-aldol mechanism. The polypeptide is Serine hydroxymethyltransferase (Escherichia coli O157:H7).